Consider the following 196-residue polypeptide: Small ribosomal subunit protein uS4C (196 aa).

Residues 87–149 (CRLDNVVYRI…HRQNEMFSNN (63 aa)) form the S4 RNA-binding domain.

Belongs to the universal ribosomal protein uS4 family. Part of the 30S ribosomal subunit. Contacts protein S5. The interaction surface between S4 and S5 is involved in control of translational fidelity.

Functionally, one of the primary rRNA binding proteins, it binds directly to 16S rRNA where it nucleates assembly of the body of the 30S subunit. Its function is as follows. With S5 and S12 plays an important role in translational accuracy. This chain is Small ribosomal subunit protein uS4C (rpsD3), found in Clostridium acetobutylicum (strain ATCC 824 / DSM 792 / JCM 1419 / IAM 19013 / LMG 5710 / NBRC 13948 / NRRL B-527 / VKM B-1787 / 2291 / W).